The sequence spans 330 residues: Syntaxin-121 (330 aa).

The segment covering 1–10 (MNNLFSSSWK) has biased composition (polar residues). Residues 1-39 (MNNLFSSSWKRTGGGGGGDGDIESGGGVEMAPPPGAAAG) are disordered. Over 1-284 (MNNLFSSSWK…RKHQKSTRKW (284 aa)) the chain is Cytoplasmic. A compositionally biased stretch (gly residues) spans 12 to 28 (TGGGGGGDGDIESGGGV). The t-SNARE coiled-coil homology domain occupies 212–274 (VAEIQERHGA…DRGREQLVVA (63 aa)). The helical; Anchor for type IV membrane protein transmembrane segment at 285–305 (TCIAIIILLVLILVVVLPIVL) threads the bilayer. Topologically, residues 306-330 (KFVNNNKSSSSSPAPATPSPPPPTA) are vesicular. The interval 311-330 (NKSSSSSPAPATPSPPPPTA) is disordered. Positions 320 to 330 (PATPSPPPPTA) are enriched in pro residues.

Belongs to the syntaxin family. Interacts with SNAP32. As to expression, expressed in roots, stems, leaf blades and leaf sheaths.

The protein localises to the cell membrane. Functionally, vesicle trafficking protein that functions in the secretory pathway. Involved in plant defense by mediating host resistance to the rice blast fungus Magnaporthe oryzae. The interaction with SNAP32 may contribute to host resistance to the rice blast fungus. In Oryza sativa subsp. japonica (Rice), this protein is Syntaxin-121.